The chain runs to 278 residues: Orotidine 5'-phosphate decarboxylase (278 aa).

K95 (proton donor) is an active-site residue.

It belongs to the OMP decarboxylase family. Type 2 subfamily.

It catalyses the reaction orotidine 5'-phosphate + H(+) = UMP + CO2. Its pathway is pyrimidine metabolism; UMP biosynthesis via de novo pathway; UMP from orotate: step 2/2. This chain is Orotidine 5'-phosphate decarboxylase, found in Corynebacterium glutamicum (strain ATCC 13032 / DSM 20300 / JCM 1318 / BCRC 11384 / CCUG 27702 / LMG 3730 / NBRC 12168 / NCIMB 10025 / NRRL B-2784 / 534).